Consider the following 267-residue polypeptide: Thyroxine 5-deiodinase (267 aa).

At Met1–His15 the chain is on the cytoplasmic side. Residues Ala16 to Leu36 form a helical; Signal-anchor for type II membrane protein membrane-spanning segment. The Extracellular portion of the chain corresponds to Asp37–Val267. The active site involves Sec131. A non-standard amino acid (selenocysteine) is located at residue Sec131.

It belongs to the iodothyronine deiodinase family. In terms of assembly, monomer. Homodimer. May undergo minor heretodimerization with DIO1 and DIO2.

The protein resides in the cell membrane. It is found in the endosome membrane. It catalyses the reaction 3,3',5'-triiodo-L-thyronine + iodide + A + H(+) = L-thyroxine + AH2. It carries out the reaction 3,3'-diiodo-L-thyronine + iodide + A + H(+) = 3,3',5-triiodo-L-thyronine + AH2. The catalysed reaction is 3-iodo-L-thyronine + iodide + A + H(+) = 3,5-diiodo-L-thyronine + AH2. The enzyme catalyses L-thyronine + iodide + A + H(+) = 3-iodo-L-thyronine + AH2. It catalyses the reaction 3',5'-diiodo-L-thyronine + iodide + A + H(+) = 3,3',5'-triiodo-L-thyronine + AH2. It carries out the reaction 3'-iodo-L-thyronine + iodide + A + H(+) = 3,3'-diiodo-L-thyronine + AH2. The catalysed reaction is 3,3',5'-triiodothyronamine + iodide + A + H(+) = 3,3',5,5'-tetraiodothyronamine + AH2. The enzyme catalyses 3',5'-diiodothyronamine + iodide + A + H(+) = 3,3',5'-triiodothyronamine + AH2. It catalyses the reaction 3,3'-diiodothyronamine + iodide + A + H(+) = 3,3',5-triiodothyronamine + AH2. It carries out the reaction 3-iodothyronamine + iodide + A + H(+) = 3,5-diiodothyronamine + AH2. The catalysed reaction is 3'-iodothyronamine + iodide + A + H(+) = 3,3'-diiodothyronamine + AH2. The enzyme catalyses thyronamine + iodide + A + H(+) = 3-iodothyronamine + AH2. Its function is as follows. Plays a crucial role in the metabolism of thyroid hormones (TH) and has specific roles in TH activation and inactivation by deiodination. Catalyzes the deiodination of L-thyroxine (T4) to 3,3',5'-triiodothyronine (rT3), 3,5,3'-triiodothyronine (T3) to 3,3'-diiodothyronine (3,3'-T2), 3,5-diiodothyronine (3,5-T2) to 3-monoiodothyronine (3-T1), rT3 to 3',5'-diiodothyronine (3',5'-T2) and 3,3'-T2 to 3'-monoiodothyronine (3'-T1) via inner-ring deiodination (IRD). Catalyzes the deiodination of 3-T1 to L-thyronine (T0) via outer-ring deiodination (ORD). Catalyzes the tyrosyl ring deiodinations of 3,3',5,5'-tetraiodothyronamine, 3,3',5'-triiodothyronamine, 3,5,3'-triiodothyronamine, 3,5-diiodothyronamine, 3,3'-diiodothyronamine and 3-iodothyronamine. The chain is Thyroxine 5-deiodinase (dio3) from Sparus aurata (Gilthead sea bream).